We begin with the raw amino-acid sequence, 233 residues long: Small ribosomal subunit protein uS3 (233 aa).

Positions 39-107 (VRQFLTKELS…PAQINIAEVR (69 aa)) constitute a KH type-2 domain.

Belongs to the universal ribosomal protein uS3 family. In terms of assembly, part of the 30S ribosomal subunit. Forms a tight complex with proteins S10 and S14.

Functionally, binds the lower part of the 30S subunit head. Binds mRNA in the 70S ribosome, positioning it for translation. The chain is Small ribosomal subunit protein uS3 from Vibrio vulnificus (strain CMCP6).